The chain runs to 475 residues: Methionine aminopeptidase 2-1 (475 aa).

Over residues 1 to 12 the composition is skewed to basic and acidic residues; the sequence is MGSKSPEGHRQT. A disordered region spans residues 1-97; that stretch reads MGSKSPEGHR…LKQSSPPRVL (97 aa). Positions 44-57 are enriched in acidic residues; sequence NLDDDNDDDGEANE. Basic residues predominate over residues 70-83; it reads KKKKRKRSKKKTKK. H211 contacts substrate. D232, D243, and H312 together coordinate a divalent metal cation. H320 is a binding site for substrate. A divalent metal cation is bound by residues E345 and E456.

It belongs to the peptidase M24A family. Methionine aminopeptidase eukaryotic type 2 subfamily. It depends on Co(2+) as a cofactor. The cofactor is Zn(2+). Mn(2+) serves as cofactor. Fe(2+) is required as a cofactor.

It is found in the cytoplasm. It carries out the reaction Release of N-terminal amino acids, preferentially methionine, from peptides and arylamides.. Functionally, cotranslationally removes the N-terminal methionine from nascent proteins. The N-terminal methionine is often cleaved when the second residue in the primary sequence is small and uncharged (Met-Ala-, Cys, Gly, Pro, Ser, Thr, or Val). In Aspergillus niger (strain ATCC MYA-4892 / CBS 513.88 / FGSC A1513), this protein is Methionine aminopeptidase 2-1.